Here is a 319-residue protein sequence, read N- to C-terminus: Acetyl-coenzyme A carboxylase carboxyl transferase subunit alpha (319 aa).

The CoA carboxyltransferase C-terminal domain maps to 38–292; it reads ALDKKAETLL…GKAIEMMLKE (255 aa).

It belongs to the AccA family. As to quaternary structure, acetyl-CoA carboxylase is a heterohexamer composed of biotin carboxyl carrier protein (AccB), biotin carboxylase (AccC) and two subunits each of ACCase subunit alpha (AccA) and ACCase subunit beta (AccD).

The protein resides in the cytoplasm. The enzyme catalyses N(6)-carboxybiotinyl-L-lysyl-[protein] + acetyl-CoA = N(6)-biotinyl-L-lysyl-[protein] + malonyl-CoA. It participates in lipid metabolism; malonyl-CoA biosynthesis; malonyl-CoA from acetyl-CoA: step 1/1. Functionally, component of the acetyl coenzyme A carboxylase (ACC) complex. First, biotin carboxylase catalyzes the carboxylation of biotin on its carrier protein (BCCP) and then the CO(2) group is transferred by the carboxyltransferase to acetyl-CoA to form malonyl-CoA. This chain is Acetyl-coenzyme A carboxylase carboxyl transferase subunit alpha, found in Cereibacter sphaeroides (strain ATCC 17029 / ATH 2.4.9) (Rhodobacter sphaeroides).